We begin with the raw amino-acid sequence, 282 residues long: Tumor necrosis factor ligand superfamily member 6 (282 aa).

Topologically, residues 1-82 are cytoplasmic; sequence MQQPFNYPYP…KKKRDHNAGL (82 aa). The disordered stretch occupies residues 30–73; the sequence is FPCPASVPGRPGQRRPPPPPPPPPPPPTLLPSRPLPPLPPPSLK. The span at 43 to 71 shows a compositional bias: pro residues; that stretch reads RRPPPPPPPPPPPPTLLPSRPLPPLPPPS. A helical; Signal-anchor for type II membrane protein membrane pass occupies residues 83-103; it reads CLLVMFFMVLVALVGLGLGMF. Residues 104-282 are Extracellular-facing; that stretch reads QLFHLQKELT…SKTFFGLYKL (179 aa). Basic and acidic residues predominate over residues 119–132; sequence ASQRHTESSLEKQI. The interval 119 to 140 is disordered; it reads ASQRHTESSLEKQIGHPNLPSE. Residues 146 to 282 enclose the THD domain; it reads KVAHLTGKPN…SKTFFGLYKL (137 aa). Residue asparagine 185 is glycosylated (N-linked (GlcNAc...) asparagine). Residues cysteine 203 and cysteine 234 are joined by a disulfide bond. Asparagine 251 and asparagine 261 each carry an N-linked (GlcNAc...) asparagine glycan.

Belongs to the tumor necrosis factor family. In terms of assembly, homotrimer. Interacts with ARHGAP9, BAIAP2L1, BTK, CACNB3, CACNB4, CRK, DLG2, DNMBP, DOCK4, EPS8L3, FGR, FYB1, FYN, HCK, ITK, ITSN2, KALRN, LYN, MACC1, MIA, MPP4, MYO15A, NCF1, NCK1, NCK2, NCKIPSD, OSTF1, PIK3R1, PSTPIP1, RIMBP3C, SAMSN1, SH3GL3, SH3PXD2B, SH3PXD2A, SH3RF2, SKAP2, SNX33, SNX9, SORBS3, SPTA1, SRC, SRGAP1, SRGAP2, SRGAP3, TEC, TJP3 and YES1. Post-translationally, the soluble form derives from the membrane form by proteolytic processing. The membrane-bound form undergoes two successive intramembrane proteolytic cleavages. The first one is processed by ADAM10 producing an N-terminal fragment, which lacks the receptor-binding extracellular domain. This ADAM10-processed FasL (FasL APL) remnant form is still membrane anchored and further processed by SPPL2A that liberates the FasL intracellular domain (FasL ICD). FasL shedding by ADAM10 is a prerequisite for subsequent intramembrane cleavage by SPPL2A in T-cells. In terms of processing, phosphorylated by FGR on tyrosine residues; this is required for ubiquitination and subsequent internalization. N-glycosylated. Glycosylation enhances apoptotic activity. Post-translationally, monoubiquitinated.

It is found in the cell membrane. It localises to the cytoplasmic vesicle lumen. The protein localises to the lysosome lumen. The protein resides in the secreted. Its subcellular location is the nucleus. Cytokine that binds to TNFRSF6/FAS, a receptor that transduces the apoptotic signal into cells. Involved in cytotoxic T-cell-mediated apoptosis, natural killer cell-mediated apoptosis and in T-cell development. Initiates fratricidal/suicidal activation-induced cell death (AICD) in antigen-activated T-cells contributing to the termination of immune responses. TNFRSF6/FAS-mediated apoptosis also has a role in the induction of peripheral tolerance. Binds to TNFRSF6B/DcR3, a decoy receptor that blocks apoptosis. Its function is as follows. Induces FAS-mediated activation of NF-kappa-B, initiating non-apoptotic signaling pathways. Can induce apoptosis but does not appear to be essential for this process. Functionally, cytoplasmic form induces gene transcription inhibition. The chain is Tumor necrosis factor ligand superfamily member 6 (FASLG) from Sus scrofa (Pig).